A 331-amino-acid chain; its full sequence is UDP-GalNAc:beta-1,3-N-acetylgalactosaminyltransferase 1 (331 aa).

The Cytoplasmic portion of the chain corresponds to 1–20; that stretch reads MASALWTVLPSRMSLRSLQW. The chain crosses the membrane as a helical; Signal-anchor for type II membrane protein span at residues 21-43; that stretch reads SLLLLSLLSFLVMWYLSLPHYNV. At 44–331 the chain is on the lumenal side; the sequence is IERVNWMYFY…VMLRNTTCHY (288 aa). 5 N-linked (GlcNAc...) asparagine glycosylation sites follow: N72, N154, N198, N212, and N326.

Belongs to the glycosyltransferase 31 family. Requires Mg(2+) as cofactor.

The protein resides in the golgi apparatus membrane. It catalyses the reaction a globoside Gb3Cer (d18:1(4E)) + UDP-N-acetyl-alpha-D-galactosamine = a globoside Gb4Cer (d18:1(4E)) + UDP + H(+). The protein operates within protein modification; protein glycosylation. Transfers N-acetylgalactosamine onto globotriaosylceramide. Plays a critical role in preimplantation stage embryonic development. This is UDP-GalNAc:beta-1,3-N-acetylgalactosaminyltransferase 1 (B3GALNT1) from Pongo abelii (Sumatran orangutan).